The chain runs to 109 residues: Aquaporin-2 (109 aa).

The Cytoplasmic portion of the chain corresponds to 1–6 (SIAFSR). Residues 7–27 (AVLAEFLATLLFVFFGLGSAL) form a helical membrane-spanning segment. Residues 28-35 (NWPQAMPS) lie on the Extracellular side of the membrane. The helical transmembrane segment at 36–54 (VLQIAMAFGLAIGTLVQAL) threads the bilayer. Topologically, residues 55–59 (GHVSG) are cytoplasmic. Residues 60 to 69 (AHINPAVTVA) constitute an intramembrane region (discontinuously helical). An NPA 1 motif is present at residues 63 to 65 (NPA). Residues 70–80 (CLVGCHVSFLR) lie on the Cytoplasmic side of the membrane. Residues 81–102 (AAFYVAAQLLGAVAGAALLHEI) form a helical membrane-spanning segment. Over 103–109 (TPPDIRR) the chain is Extracellular.

It belongs to the MIP/aquaporin (TC 1.A.8) family. Homotetramer. In terms of processing, serine phosphorylation is necessary and sufficient for expression at the apical membrane. Endocytosis is not phosphorylation-dependent. N-glycosylated.

The protein localises to the apical cell membrane. It is found in the basolateral cell membrane. The protein resides in the cell membrane. It localises to the cytoplasmic vesicle membrane. Its subcellular location is the golgi apparatus. The protein localises to the trans-Golgi network membrane. It catalyses the reaction H2O(in) = H2O(out). The enzyme catalyses glycerol(in) = glycerol(out). In terms of biological role, forms a water-specific channel that provides the plasma membranes of renal collecting duct with high permeability to water, thereby permitting water to move in the direction of an osmotic gradient. Plays an essential role in renal water homeostasis. Could also be permeable to glycerol. The chain is Aquaporin-2 from Equus caballus (Horse).